The primary structure comprises 180 residues: Amnesiac neuropeptides (180 aa).

The first 32 residues, 1–32 (MRSFCCCFYPAAVALHCVLLFYTFFLLFRASA), serve as a signal peptide directing secretion. Propeptides lie at residues 33–35 (LRR) and 152–180 (GRRS…GEMR). The interval 155–180 (SVPRGQPKFSRENPRALSPSLLGEMR) is disordered.

As to expression, enriched expression in the embryonic and larval nervous systems. Strongly expressed in two large neurons that project over all the lobes of the mushroom bodies.

It localises to the secreted. Its function is as follows. Required for associative learning and memory in adults. Expression pattern suggests a modulatory role in memory formation. Controls neurotransmitter-mediated signaling pathways associated with the structure of the larval peripheral nerve. This Drosophila melanogaster (Fruit fly) protein is Amnesiac neuropeptides (amn).